We begin with the raw amino-acid sequence, 92 residues long: uncharacterized protein (92 aa).

In terms of biological role, homolog of shope fibroma virus T4A ORF. This is an uncharacterized protein from Swinepox virus (strain Kasza) (SWPV).